Consider the following 366-residue polypeptide: NADH-quinone oxidoreductase subunit D (366 aa).

It belongs to the complex I 49 kDa subunit family. As to quaternary structure, NDH-1 is composed of 14 different subunits. Subunits NuoB, C, D, E, F, and G constitute the peripheral sector of the complex.

Its subcellular location is the cell membrane. The catalysed reaction is a quinone + NADH + 5 H(+)(in) = a quinol + NAD(+) + 4 H(+)(out). NDH-1 shuttles electrons from NADH, via FMN and iron-sulfur (Fe-S) centers, to quinones in the respiratory chain. The immediate electron acceptor for the enzyme in this species is believed to be a menaquinone. Couples the redox reaction to proton translocation (for every two electrons transferred, four hydrogen ions are translocated across the cytoplasmic membrane), and thus conserves the redox energy in a proton gradient. The protein is NADH-quinone oxidoreductase subunit D of Desulforamulus reducens (strain ATCC BAA-1160 / DSM 100696 / MI-1) (Desulfotomaculum reducens).